A 974-amino-acid polypeptide reads, in one-letter code: Phosphoenolpyruvate carboxylase 1 (974 aa).

Catalysis depends on residues H164 and K604.

It belongs to the PEPCase type 1 family. As to quaternary structure, exists as a homotetramer or heterooligomer. Mg(2+) is required as a cofactor.

The protein resides in the cytoplasm. The catalysed reaction is oxaloacetate + phosphate = phosphoenolpyruvate + hydrogencarbonate. With respect to regulation, activated by glutamine and dihydroxyacetone phosphate. Inhibited by glutamate, aspartate, 2-oxoglutarate and malate. Through the carboxylation of phosphoenolpyruvate (PEP) it forms oxaloacetate, a four-carbon dicarboxylic acid source for the tricarboxylic acid cycle. The polypeptide is Phosphoenolpyruvate carboxylase 1 (Chlamydomonas reinhardtii (Chlamydomonas smithii)).